The chain runs to 660 residues: DNA mismatch repair protein MutL (660 aa).

A disordered region spans residues Ser-414–Asn-433.

The protein belongs to the DNA mismatch repair MutL/HexB family.

This protein is involved in the repair of mismatches in DNA. It is required for dam-dependent methyl-directed DNA mismatch repair. May act as a 'molecular matchmaker', a protein that promotes the formation of a stable complex between two or more DNA-binding proteins in an ATP-dependent manner without itself being part of a final effector complex. The polypeptide is DNA mismatch repair protein MutL (Streptococcus pyogenes serotype M5 (strain Manfredo)).